The following is a 380-amino-acid chain: Cytochrome b (380 aa).

The next 4 helical transmembrane spans lie at phenylalanine 34–methionine 54, tryptophan 78–isoleucine 99, tryptophan 114–leucine 134, and phenylalanine 179–leucine 199. Residues histidine 84 and histidine 98 each coordinate heme b. 2 residues coordinate heme b: histidine 183 and histidine 197. A ubiquinone is bound at residue histidine 202. The next 4 membrane-spanning stretches (helical) occupy residues tyrosine 227–threonine 247, leucine 289–histidine 309, isoleucine 321–glycine 341, and phenylalanine 348–proline 368.

Belongs to the cytochrome b family. The cytochrome bc1 complex contains 3 respiratory subunits (MT-CYB, CYC1 and UQCRFS1), 2 core proteins (UQCRC1 and UQCRC2) and probably 6 low-molecular weight proteins. The cofactor is heme b.

It localises to the mitochondrion inner membrane. Its function is as follows. Component of the ubiquinol-cytochrome c reductase complex (complex III or cytochrome b-c1 complex) that is part of the mitochondrial respiratory chain. The b-c1 complex mediates electron transfer from ubiquinol to cytochrome c. Contributes to the generation of a proton gradient across the mitochondrial membrane that is then used for ATP synthesis. This is Cytochrome b (mt-cyb) from Pastinachus sephen (Cowtail stingray).